The primary structure comprises 340 residues: ATPase BagA (340 aa).

Residues Gly-31, Gly-33, Lys-34, Ser-35, Thr-36, Asn-240, Pro-316, and Val-318 each coordinate ATP.

Belongs to the arsA ATPase family. BagA/BagB subfamily. As to quaternary structure, forms a heterodimer composed of BagA and BagB. Interacts with Rv1509. Also interacts with a large number of proteins, including proteins required for mycolic acid biosynthesis.

The ATPase activity of the BagAB complex is not stimulated by antimonite, an arsenite substitute, suggesting that BagAB is not a transporter for this family of elements. Its function is as follows. Component of the heterodimeric BagAB ATPase complex, whose two subunits are actively involved in ATP hydrolysis. The ATPase activity is required to mediate resistance against nitric oxide (NO) and elevated levels of glycerol. The polypeptide is ATPase BagA (Mycobacterium tuberculosis (strain ATCC 25618 / H37Rv)).